The chain runs to 900 residues: Alanine--tRNA ligase (900 aa).

Zn(2+) is bound by residues histidine 567, histidine 571, cysteine 671, and histidine 675.

Belongs to the class-II aminoacyl-tRNA synthetase family. The cofactor is Zn(2+).

The protein resides in the cytoplasm. The enzyme catalyses tRNA(Ala) + L-alanine + ATP = L-alanyl-tRNA(Ala) + AMP + diphosphate. In terms of biological role, catalyzes the attachment of alanine to tRNA(Ala) in a two-step reaction: alanine is first activated by ATP to form Ala-AMP and then transferred to the acceptor end of tRNA(Ala). Also edits incorrectly charged Ser-tRNA(Ala) and Gly-tRNA(Ala) via its editing domain. In Mycoplasma pneumoniae (strain ATCC 29342 / M129 / Subtype 1) (Mycoplasmoides pneumoniae), this protein is Alanine--tRNA ligase.